We begin with the raw amino-acid sequence, 375 residues long: F-box/kelch-repeat protein At4g39580 (375 aa).

The F-box domain occupies 20–66 (PTTNLFLPDDILLSSLSRISRLYYPTFSLVSKSFRSLIASPELYQTR). Kelch repeat units follow at residues 132–178 (NIYA…VLDG), 179–225 (KIYV…KSVG), and 229–269 (KYHL…VINN).

The polypeptide is F-box/kelch-repeat protein At4g39580 (Arabidopsis thaliana (Mouse-ear cress)).